Consider the following 726-residue polypeptide: Fatty acid oxidation complex subunit alpha (726 aa).

Residues 1–189 are enoyl-CoA hydratase/isomerase; that stretch reads MIYQGENLSV…KIGMVDGIVS (189 aa). D296 is a binding site for substrate. Positions 311 to 726 are 3-hydroxyacyl-CoA dehydrogenase; the sequence is EPVKNAAVLG…PKSSVSSPSV (416 aa). NAD(+) is bound by residues M324, D343, 400 to 402, K407, and S429; that span reads VVE. Residue H450 is the For 3-hydroxyacyl-CoA dehydrogenase activity of the active site. N453 lines the NAD(+) pocket. The substrate site is built by N500 and Y660.

The protein in the N-terminal section; belongs to the enoyl-CoA hydratase/isomerase family. In the C-terminal section; belongs to the 3-hydroxyacyl-CoA dehydrogenase family. As to quaternary structure, heterotetramer of two alpha chains (FadB) and two beta chains (FadA).

It catalyses the reaction a (3S)-3-hydroxyacyl-CoA + NAD(+) = a 3-oxoacyl-CoA + NADH + H(+). The catalysed reaction is a (3S)-3-hydroxyacyl-CoA = a (2E)-enoyl-CoA + H2O. It carries out the reaction a 4-saturated-(3S)-3-hydroxyacyl-CoA = a (3E)-enoyl-CoA + H2O. The enzyme catalyses (3S)-3-hydroxybutanoyl-CoA = (3R)-3-hydroxybutanoyl-CoA. It catalyses the reaction a (3Z)-enoyl-CoA = a 4-saturated (2E)-enoyl-CoA. The catalysed reaction is a (3E)-enoyl-CoA = a 4-saturated (2E)-enoyl-CoA. The protein operates within lipid metabolism; fatty acid beta-oxidation. Its function is as follows. Involved in the aerobic and anaerobic degradation of long-chain fatty acids via beta-oxidation cycle. Catalyzes the formation of 3-oxoacyl-CoA from enoyl-CoA via L-3-hydroxyacyl-CoA. It can also use D-3-hydroxyacyl-CoA and cis-3-enoyl-CoA as substrate. This chain is Fatty acid oxidation complex subunit alpha, found in Aliivibrio salmonicida (strain LFI1238) (Vibrio salmonicida (strain LFI1238)).